Here is a 254-residue protein sequence, read N- to C-terminus: Triosephosphate isomerase (254 aa).

12-14 lines the substrate pocket; sequence NWK. Residue histidine 99 is the Electrophile of the active site. The active-site Proton acceptor is glutamate 169. Substrate contacts are provided by residues glycine 175, serine 214, and 235 to 236; that span reads GG.

This sequence belongs to the triosephosphate isomerase family. In terms of assembly, homodimer.

Its subcellular location is the cytoplasm. The catalysed reaction is D-glyceraldehyde 3-phosphate = dihydroxyacetone phosphate. It functions in the pathway carbohydrate biosynthesis; gluconeogenesis. The protein operates within carbohydrate degradation; glycolysis; D-glyceraldehyde 3-phosphate from glycerone phosphate: step 1/1. In terms of biological role, involved in the gluconeogenesis. Catalyzes stereospecifically the conversion of dihydroxyacetone phosphate (DHAP) to D-glyceraldehyde-3-phosphate (G3P). The sequence is that of Triosephosphate isomerase from Chelativorans sp. (strain BNC1).